The primary structure comprises 341 residues: 1-aminocyclopropane-1-carboxylate deaminase (341 aa).

N-acetylserine is present on serine 1. At lysine 51 the chain carries N6-(pyridoxal phosphate)lysine. The Nucleophile role is filled by serine 78.

This sequence belongs to the ACC deaminase/D-cysteine desulfhydrase family. Homodimer. Requires pyridoxal 5'-phosphate as cofactor.

The enzyme catalyses 1-aminocyclopropane-1-carboxylate + H2O = 2-oxobutanoate + NH4(+). Its function is as follows. Catalyzes a cyclopropane ring-opening reaction, the irreversible conversion of 1-aminocyclopropane-1-carboxylate (ACC) to ammonia and alpha-ketobutyrate. This is 1-aminocyclopropane-1-carboxylate deaminase from Cyberlindnera saturnus (Yeast).